The chain runs to 1514 residues: Neurexin-1 (1514 aa).

The N-terminal stretch at 1-30 (MGTALVQRGGCCLLCLSLLLLGCWAELGSG) is a signal peptide. The Laminin G-like 1 domain occupies 31–217 (LEFPGAEGQW…PPNSGGGSPC (187 aa)). The Extracellular segment spans residues 31 to 1438 (LEFPGAEGQW…EVIRESSSTT (1408 aa)). Asn125 and Asn190 each carry an N-linked (GlcNAc...) asparagine glycan. Residues 197 to 221 (VDGGEVKLDDEPPNSGGGSPCEAGE) are disordered. The EGF-like 1 domain occupies 219-256 (AGEEGEGGVCLNGGVCSVVDDQAVCDCSRTGFRGKDCS). 2 disulfide bridges follow: Cys228/Cys243 and Cys245/Cys255. Laminin G-like domains lie at 283 to 480 (IATF…AFKC) and 487 to 679 (DPIT…KPSC). Residues Asp329, Leu346, and Met414 each coordinate Ca(2+). Intrachain disulfides connect Cys444-Cys480, Cys650-Cys679, Cys687-Cys698, Cys692-Cys707, and Cys709-Cys719. An EGF-like 2 domain is found at 683-720 (TAKPCLSNPCKNNGMCRDGWNRYVCDCSGTGYLGRSCE). 2 consecutive Laminin G-like domains span residues 725 to 898 (VLSY…IDYC) and 912 to 1087 (DPVT…ERGC). 2 residues coordinate Ca(2+): Asp772 and Leu789. An N-linked (GlcNAc...) asparagine glycan is attached at Asn797. A Ca(2+)-binding site is contributed by Arg848. 5 disulfide bridges follow: Cys890/Cys898, Cys1059/Cys1087, Cys1094/Cys1105, Cys1099/Cys1114, and Cys1116/Cys1126. The EGF-like 3 domain occupies 1090–1127 (PSTTCQEDSCSNQGVCLQQWDGFSCDCSMTSFSGPLCN). Residues 1133–1331 (YIFSKGGGQI…DANIAIVGNV (199 aa)) form the Laminin G-like 6 domain. Asp1183 and Val1200 together coordinate Ca(2+). The N-linked (GlcNAc...) asparagine glycan is linked to Asn1230. Ca(2+) is bound by residues Ile1282 and Asn1284. Ser1392 carries O-linked (Xyl...) (heparan sulfate) serine glycosylation. Residues 1396–1427 (PSDDEDIDPCEPSSGGLANPTRVGGREPYPGS) form a disordered region. The helical transmembrane segment at 1439 to 1459 (GMVVGIVAAAALCILILLYAM) threads the bilayer. Topologically, residues 1460–1514 (YKYRNRDEGSYHVDESRNYISNSAQSNGAVVKEKQPSSAKSANKNKKNKDKEYYV) are cytoplasmic. The tract at residues 1481 to 1507 (NSAQSNGAVVKEKQPSSAKSANKNKKN) is interaction with CASK. Positions 1481–1514 (NSAQSNGAVVKEKQPSSAKSANKNKKNKDKEYYV) are disordered.

It belongs to the neurexin family. Interacts (via laminin G-like domain 2 and/or laminin G-like domain 6) with NLGN1 forming a heterotetramer, where one NLGN1 dimer interacts with one NRXN1 dimer. Also interacts (via laminin G-like domain 2 and/or laminin G-like domain 6) with NLGN2, NLGN3 and NLGN4L; interactions with NLGN1, NLGN2, NLGN3 and NLGN4L are calcium-dependent. Interacts (via cytoplasmic C-terminal region) with CASK (via the PDZ, SH3 and guanylate kinase-like domains). Interacts (via cytoplasmic C-terminus) with CASKIN1 and APBA1. Interacts (via laminin G-like domain 2) with NXPH1 and NXPH3. Alpha-type isoforms (neurexin-1-alpha) interact (via laminin G-like domain 2 and/or laminin G-like domain 6) with DAG1 (via alpha-dystroglycan chain). Interacts with LRRTM1, LRRTM2, LRRTM3 and LRRTM4. Interacts with SYT13 and SYTL1. Interacts with CBLN1, CBLN2 and, less avidly, with CBLN4. Interacts with CLSTN3. Post-translationally, O-glycosylated; contains heparan sulfate. Heparan sulfate attachment is required for synapse development by mediating interactions with neuroligins and LRRTM2.

It localises to the presynaptic cell membrane. In terms of biological role, cell surface protein involved in cell-cell-interactions, exocytosis of secretory granules and regulation of signal transmission. Function is isoform-specific. Alpha-type isoforms have a long N-terminus with six laminin G-like domains and play an important role in synaptic signal transmission. Alpha-type isoforms play a role in the regulation of calcium channel activity and Ca(2+)-triggered neurotransmitter release at synapses and at neuromuscular junctions. They play an important role in Ca(2+)-triggered exocytosis of secretory granules in pituitary gland. They may affect their functions at synapses and in endocrine cells via their interactions with proteins from the exocytotic machinery. Likewise, alpha-type isoforms play a role in regulating the activity of postsynaptic NMDA receptors, a subtype of glutamate-gated ion channels. Both alpha-type and beta-type isoforms may play a role in the formation or maintenance of synaptic junctions via their interactions (via the extracellular domains) with neuroligin family members, CBLN1 or CBLN2. In vitro, triggers the de novo formation of presynaptic structures. May be involved in specification of excitatory synapses. Alpha-type isoforms were first identified as receptors for alpha-latrotoxin from spider venom. In Mus musculus (Mouse), this protein is Neurexin-1 (Nrxn1).